A 260-amino-acid polypeptide reads, in one-letter code: Pectate lyase H (260 aa).

Positions methionine 1 to alanine 17 are cleaved as a signal peptide.

The protein belongs to the polysaccharide lyase 3 family. Ca(2+) serves as cofactor.

The protein localises to the secreted. It carries out the reaction Eliminative cleavage of (1-&gt;4)-alpha-D-galacturonan to give oligosaccharides with 4-deoxy-alpha-D-galact-4-enuronosyl groups at their non-reducing ends.. Functionally, pectinolytic enzyme consist of four classes of enzymes: pectin lyase, polygalacturonase, pectin methylesterase and rhamnogalacturonase. Among pectinolytic enzymes, pectin lyase is the most important in depolymerization of pectin, since it cleaves internal glycosidic bonds of highly methylated pectins. Favors pectate, the anion, over pectin, the methyl ester. This chain is Pectate lyase H (plyH), found in Emericella nidulans (strain FGSC A4 / ATCC 38163 / CBS 112.46 / NRRL 194 / M139) (Aspergillus nidulans).